A 466-amino-acid polypeptide reads, in one-letter code: Argininosuccinate lyase 1 (466 aa).

It belongs to the lyase 1 family. Argininosuccinate lyase subfamily.

The protein resides in the cytoplasm. It carries out the reaction 2-(N(omega)-L-arginino)succinate = fumarate + L-arginine. The protein operates within amino-acid biosynthesis; L-arginine biosynthesis; L-arginine from L-ornithine and carbamoyl phosphate: step 3/3. The sequence is that of Argininosuccinate lyase 1 from Agrobacterium fabrum (strain C58 / ATCC 33970) (Agrobacterium tumefaciens (strain C58)).